Consider the following 127-residue polypeptide: MPRPKKCRRVGFIPGNACFHPEIKSQVQVVLSIEEVEAIRLADYLAIGQDGAAESMNISRGTFQRIINSARKKMADALIHGKTIRIDGGNYQVESGRSCCRRQSGECRTVNCDRCTGCMDCHKSTNI.

It belongs to the UPF0251 family.

The protein is UPF0251 protein Ccel_0627 of Ruminiclostridium cellulolyticum (strain ATCC 35319 / DSM 5812 / JCM 6584 / H10) (Clostridium cellulolyticum).